Reading from the N-terminus, the 356-residue chain is Probable arabinogalactan endo-beta-1,4-galactanase A (356 aa).

The signal sequence occupies residues methionine 1 to alanine 21. The N-linked (GlcNAc...) asparagine glycan is linked to asparagine 133. Glutamate 157 acts as the Proton donor in catalysis. Glutamate 268 functions as the Nucleophile in the catalytic mechanism.

This sequence belongs to the glycosyl hydrolase 53 family.

The protein localises to the secreted. It carries out the reaction The enzyme specifically hydrolyzes (1-&gt;4)-beta-D-galactosidic linkages in type I arabinogalactans.. Functionally, endogalactanase involved in the degradation of plant cell wall polysaccharides, and more particularly of hairy regions of pectin. In Aspergillus fumigatus (strain CBS 144.89 / FGSC A1163 / CEA10) (Neosartorya fumigata), this protein is Probable arabinogalactan endo-beta-1,4-galactanase A (galA).